Consider the following 644-residue polypeptide: uncharacterized protein (644 aa).

A disordered region spans residues 1-39 (MKANGLDNDPARTRMERTDIDSEHPEAQPLLNNNHRTLG). The Cytoplasmic portion of the chain corresponds to 1–90 (MKANGLDNDP…ILNILILINT (90 aa)). A compositionally biased stretch (basic and acidic residues) spans 9 to 26 (DPARTRMERTDIDSEHPE). Phosphoserine is present on residues serine 22, serine 56, and serine 63. A helical transmembrane segment spans residues 91 to 111 (IWLVTTLISDFFFNINILFGF). The Vacuolar segment spans residues 112-122 (SNRYASFNDLT). A helical transmembrane segment spans residues 123–143 (LIFISIIANSFNLWFNKLGLY). Residues 144–147 (SALD) are Cytoplasmic-facing. A helical transmembrane segment spans residues 148–168 (YSLNVTLCVLTLFNLALTYLI). The Vacuolar segment spans residues 169 to 174 (KYTRQR). Residues 175–195 (IGFVGTFTYLWTSFSFFIGAI) form a helical membrane-spanning segment. The Cytoplasmic portion of the chain corresponds to 196–271 (LDWYLLFYNN…EWVSIGFRNT (76 aa)). The interval 225-251 (NENHTNSTENRDRSQYGSGSPTPTHRS) is disordered. Residues 239-251 (QYGSGSPTPTHRS) show a composition bias toward polar residues. At serine 244 the chain carries Phosphoserine. A helical transmembrane segment spans residues 272-292 (IKFLILIFFALFTLNTLLTTL). At 293–644 (DTYRLTHKLP…IGELGKLTED (352 aa)) the chain is on the vacuolar side. One can recognise an AB hydrolase-1 domain in the interval 348–619 (PIILFEHGGY…IVEGGHEIYK (272 aa)). Positions 469-492 (GRGDGDDGDDGNGNDGDGRNHDKT) are disordered.

It localises to the vacuole membrane. This is an uncharacterized protein from Saccharomyces cerevisiae (strain YJM789) (Baker's yeast).